The chain runs to 84 residues: MNNNTRTLQCRVISNKMQKSAVVAFERFVKHSIYGKFIRRTTKLHIHDENNECNVGDIVSIRECRPISKTKAWTFVGVIKKALT.

This sequence belongs to the universal ribosomal protein uS17 family. Part of the 30S ribosomal subunit.

Functionally, one of the primary rRNA binding proteins, it binds specifically to the 5'-end of 16S ribosomal RNA. The protein is Small ribosomal subunit protein uS17 of Hamiltonella defensa subsp. Acyrthosiphon pisum (strain 5AT).